The primary structure comprises 438 residues: Plasmalemma vesicle-associated protein (438 aa).

Residues 1–26 (MGLSMDRSPYSRTGDRDRGCWYYLRY) are Cytoplasmic-facing. The helical; Signal-anchor for type II membrane protein transmembrane segment at 27 to 47 (FFLFVSLIQFLIILGLVLFMI) threads the bilayer. Residues 48–438 (YGNVHATTES…LVNPAVPPSG (391 aa)) are Extracellular-facing. N-linked (GlcNAc...) asparagine glycosylation is found at asparagine 82, asparagine 88, asparagine 112, and asparagine 150. A coiled-coil region spans residues 289 to 383 (AGIERVTREN…TEVDVRISAL (95 aa)). Positions 393 to 438 (PAIQPRLPGPPPNPPPIDPASLEEFKKRILESQRPPLVNPAVPPSG) are disordered. Pro residues-rich tracts occupy residues 399–410 (LPGPPPNPPPID) and 429–438 (LVNPAVPPSG).

Homodimer. Expressed in lung (alveolar endothelial and bronchial epithelial cells), kidney (endothelium of peritubular capillaries), spleen, liver, adrenal (endothelial cells of the zona reticularis of the cortex and chromaffin cells in the medulla), pancreas (islets of Langerhans), testis (germ cells, interstitial cells in neonatal testis and spermatids), ovary (stromal endothelial, thecal layer of developing follicles, luteal cells within the corpus luteum), intestine (endothelium of capillaries of the intestinal villi) and pituitary (pituicyte cells in the neural lobe) (at protein level). Expressed in lung, kidney, spleen, liver, adrenal, testis, heart, muscle, pituitary, thyroid and ovary.

The protein resides in the cell membrane. Its subcellular location is the membrane. It localises to the caveola. The protein localises to the cytoplasm. It is found in the perinuclear region. In terms of biological role, endothelial cell-specific membrane protein involved in the formation of the diaphragms that bridge endothelial fenestrae. It is also required for the formation of stomata of caveolae and transendothelial channels. Functions in microvascular permeability, endothelial fenestrae contributing to the passage of water and solutes and regulating transcellular versus paracellular flow in different organs. Plays a specific role in embryonic development. This chain is Plasmalemma vesicle-associated protein (Plvap), found in Rattus norvegicus (Rat).